A 507-amino-acid chain; its full sequence is Nuclear poly(A) polymerase 3 (507 aa).

ATP contacts are provided by residues 79-81 (YGS), 91-94 (SDID), Asp147, Lys208, Tyr217, and 226-227 (GV). Asp92, Asp94, and Asp147 together coordinate Mg(2+).

The protein belongs to the poly(A) polymerase family. In terms of assembly, monomer. Forms a complex with cleavage and polyadenylation specificity factor (CPSF) subunits FIPS5 and CPSF30. Mg(2+) serves as cofactor. The cofactor is Mn(2+). As to expression, expressed in leaves (mostly in petioles and tips), cotyledon, roots (tips, vascular tissue of the radicle, and throughout the root tissue excluding the elongation zone), stems, and flowers (restricted to the stigma and the pollen in mature anthers). Active in the primary and secondary root systems.

The protein localises to the nucleus. The catalysed reaction is RNA(n) + ATP = RNA(n)-3'-adenine ribonucleotide + diphosphate. Functionally, essential protein. Polymerase that creates the 3'-poly(A) tail of mRNA's. Also required for the endoribonucleolytic cleavage reaction at some polyadenylation sites. May acquire specificity through interaction with a cleavage and polyadenylation specificity factor (CPSF) at its C-terminus. This is Nuclear poly(A) polymerase 3 from Arabidopsis thaliana (Mouse-ear cress).